Consider the following 297-residue polypeptide: Probable deoxyhypusine synthase (297 aa).

K265 (nucleophile) is an active-site residue.

It belongs to the deoxyhypusine synthase family. It depends on NAD(+) as a cofactor.

It carries out the reaction [eIF5A protein]-L-lysine + spermidine = [eIF5A protein]-deoxyhypusine + propane-1,3-diamine. Its pathway is protein modification; eIF5A hypusination. Its function is as follows. Catalyzes the NAD-dependent oxidative cleavage of spermidine and the subsequent transfer of the butylamine moiety of spermidine to the epsilon-amino group of a specific lysine residue of the eIF-5A precursor protein to form the intermediate deoxyhypusine residue. This is Probable deoxyhypusine synthase from Methanopyrus kandleri (strain AV19 / DSM 6324 / JCM 9639 / NBRC 100938).